A 431-amino-acid chain; its full sequence is Adenylosuccinate lyase (431 aa).

Residues 4–5 (RY), 67–69 (RHD), and 93–94 (TS) contribute to the N(6)-(1,2-dicarboxyethyl)-AMP site. His141 functions as the Proton donor/acceptor in the catalytic mechanism. Gln212 contacts N(6)-(1,2-dicarboxyethyl)-AMP. Ser262 serves as the catalytic Proton donor/acceptor. N(6)-(1,2-dicarboxyethyl)-AMP-binding positions include Ser263, 268-270 (KRN), Asn276, and 307-311 (SAERI).

The protein belongs to the lyase 1 family. Adenylosuccinate lyase subfamily. As to quaternary structure, homodimer and homotetramer. Residues from neighboring subunits contribute catalytic and substrate-binding residues to each active site.

The enzyme catalyses N(6)-(1,2-dicarboxyethyl)-AMP = fumarate + AMP. It catalyses the reaction (2S)-2-[5-amino-1-(5-phospho-beta-D-ribosyl)imidazole-4-carboxamido]succinate = 5-amino-1-(5-phospho-beta-D-ribosyl)imidazole-4-carboxamide + fumarate. Its pathway is purine metabolism; AMP biosynthesis via de novo pathway; AMP from IMP: step 2/2. It participates in purine metabolism; IMP biosynthesis via de novo pathway; 5-amino-1-(5-phospho-D-ribosyl)imidazole-4-carboxamide from 5-amino-1-(5-phospho-D-ribosyl)imidazole-4-carboxylate: step 2/2. Functionally, catalyzes two reactions in de novo purine nucleotide biosynthesis. Catalyzes the breakdown of 5-aminoimidazole- (N-succinylocarboxamide) ribotide (SAICAR or 2-[5-amino-1-(5-phospho-beta-D-ribosyl)imidazole-4-carboxamido]succinate) to 5-aminoimidazole-4-carboxamide ribotide (AICAR or 5-amino-1-(5-phospho-beta-D-ribosyl)imidazole-4-carboxamide) and fumarate, and of adenylosuccinate (ADS or N(6)-(1,2-dicarboxyethyl)-AMP) to adenosine monophosphate (AMP) and fumarate. This is Adenylosuccinate lyase (purB) from Staphylococcus haemolyticus (strain JCSC1435).